The primary structure comprises 356 residues: Chorismate synthase (356 aa).

NADP(+) is bound by residues Arg48 and Arg54. Residues 125–127 (RSS), 237–238 (NA), Gly282, 297–301 (KPTSS), and Arg323 each bind FMN.

It belongs to the chorismate synthase family. As to quaternary structure, homotetramer. Requires FMNH2 as cofactor.

It carries out the reaction 5-O-(1-carboxyvinyl)-3-phosphoshikimate = chorismate + phosphate. It participates in metabolic intermediate biosynthesis; chorismate biosynthesis; chorismate from D-erythrose 4-phosphate and phosphoenolpyruvate: step 7/7. Catalyzes the anti-1,4-elimination of the C-3 phosphate and the C-6 proR hydrogen from 5-enolpyruvylshikimate-3-phosphate (EPSP) to yield chorismate, which is the branch point compound that serves as the starting substrate for the three terminal pathways of aromatic amino acid biosynthesis. This reaction introduces a second double bond into the aromatic ring system. The polypeptide is Chorismate synthase (Rhizorhabdus wittichii (strain DSM 6014 / CCUG 31198 / JCM 15750 / NBRC 105917 / EY 4224 / RW1) (Sphingomonas wittichii)).